We begin with the raw amino-acid sequence, 297 residues long: ClpXP adapter protein SpxH (297 aa).

The protein belongs to the SpxH family. As to quaternary structure, interacts with Spx.

Its subcellular location is the cytoplasm. Its function is as follows. Adapter protein required for efficient degradation of Spx by ClpXP under non-stress conditions. Interaction with Spx stabilizes Spx and exposes the C-terminus of Spx for recognition and proteolysis by ClpXP. The sequence is that of ClpXP adapter protein SpxH from Bacillus thuringiensis subsp. konkukian (strain 97-27).